A 348-amino-acid chain; its full sequence is Ion-translocating oxidoreductase complex subunit D (348 aa).

The next 4 membrane-spanning stretches (helical) occupy residues 23 to 43 (WVLA…GYGT), 44 to 64 (LIQL…IMLL), 72 to 91 (ALRD…AIPP), and 126 to 146 (IAYV…MAPI). T187 is modified (FMN phosphoryl threonine). The next 5 helical transmembrane spans lie at 214-234 (FAGI…LILL), 243-263 (IPMA…LFAP), 266-286 (TASP…FFIA), 300-320 (LIYG…GGFP), and 321-341 (DGVA…DYYT).

Belongs to the NqrB/RnfD family. In terms of assembly, the complex is composed of six subunits: RnfA, RnfB, RnfC, RnfD, RnfE and RnfG. It depends on FMN as a cofactor.

It is found in the cell inner membrane. Part of a membrane-bound complex that couples electron transfer with translocation of ions across the membrane. This Vibrio cholerae serotype O1 (strain ATCC 39315 / El Tor Inaba N16961) protein is Ion-translocating oxidoreductase complex subunit D.